Here is a 292-residue protein sequence, read N- to C-terminus: Tumor necrosis factor alpha-induced protein 8-like protein 3 (292 aa).

The interval 81 to 107 (DAQPAARSMDSDSGEQSEGEPVTAAGP) is disordered. The segment at 109–292 (VFSSKSLALQ…INKLLDEKVL (184 aa)) is binding to phosphoinositides.

Belongs to the TNFAIP8 family. Widely expressed (at protein level). Highly expressed in most carcinoma cell lines.

Its subcellular location is the cytoplasm. The protein resides in the cell membrane. In terms of biological role, acts as a lipid transfer protein. Preferentially captures and shuttles two lipid second messengers, i.e., phosphatidylinositol 4,5- bisphosphate and phosphatidylinositol 3,4,5-trisphosphate and increases their levels in the plasma membrane. Additionally, may also function as a lipid-presenting protein to enhance the activity of the PI3K-AKT and MEK-ERK pathways. May act as a regulator of tumorigenesis through its activation of phospholipid signaling. The sequence is that of Tumor necrosis factor alpha-induced protein 8-like protein 3 (TNFAIP8L3) from Homo sapiens (Human).